Here is a 140-residue protein sequence, read N- to C-terminus: Large ribosomal subunit protein uL14 (140 aa).

Belongs to the universal ribosomal protein uL14 family.

The sequence is that of Large ribosomal subunit protein uL14 (RPL23) from Nicotiana tabacum (Common tobacco).